The sequence spans 209 residues: Small ribosomal subunit protein uS4 (209 aa).

The S4 RNA-binding domain maps to 98–164 (SRLDNVVYRG…TPFIVARETA (67 aa)).

It belongs to the universal ribosomal protein uS4 family. In terms of assembly, part of the 30S ribosomal subunit. Contacts protein S5. The interaction surface between S4 and S5 is involved in control of translational fidelity.

Functionally, one of the primary rRNA binding proteins, it binds directly to 16S rRNA where it nucleates assembly of the body of the 30S subunit. Its function is as follows. With S5 and S12 plays an important role in translational accuracy. The chain is Small ribosomal subunit protein uS4 from Frankia alni (strain DSM 45986 / CECT 9034 / ACN14a).